A 189-amino-acid polypeptide reads, in one-letter code: Ribosome maturation factor RimM (189 aa).

The PRC barrel domain occupies 96-169 (EDEFYYADLE…TLLIDPLAAG (74 aa)).

It belongs to the RimM family. In terms of assembly, binds ribosomal protein uS19.

It localises to the cytoplasm. An accessory protein needed during the final step in the assembly of 30S ribosomal subunit, possibly for assembly of the head region. Essential for efficient processing of 16S rRNA. May be needed both before and after RbfA during the maturation of 16S rRNA. It has affinity for free ribosomal 30S subunits but not for 70S ribosomes. This is Ribosome maturation factor RimM from Rhizobium johnstonii (strain DSM 114642 / LMG 32736 / 3841) (Rhizobium leguminosarum bv. viciae).